A 385-amino-acid chain; its full sequence is Aspartate/prephenate aminotransferase (385 aa).

Residues Gly39, Trp125, and Asn175 each contribute to the L-aspartate site. Lys234 is modified (N6-(pyridoxal phosphate)lysine). Residue Arg361 participates in L-aspartate binding.

Belongs to the class-I pyridoxal-phosphate-dependent aminotransferase family. In terms of assembly, homodimer. It depends on pyridoxal 5'-phosphate as a cofactor.

The protein resides in the cytoplasm. The enzyme catalyses L-aspartate + 2-oxoglutarate = oxaloacetate + L-glutamate. It catalyses the reaction L-arogenate + oxaloacetate = prephenate + L-aspartate. In terms of biological role, catalyzes the reversible conversion of aspartate and 2-oxoglutarate to glutamate and oxaloacetate. Can also transaminate prephenate in the presence of aspartate. This is Aspartate/prephenate aminotransferase (aspC) from Thermus thermophilus (strain ATCC 27634 / DSM 579 / HB8).